The sequence spans 280 residues: Gem-associated protein 2 (280 aa).

The interval 1-39 is may play a minor inhibitory role in snRNA binding to 5Sm (SNRPD1, SNRPD2, SNRPE, SNRPF and SNRPG) during snRNP assembly by inserting into the RNA binding pocket of 5Sm; the sequence is MRRAELAGLKTMAWVPAESAVEELMPRLLPVEPCDLTEG. A phosphoserine mark is found at Ser81 and Ser166.

Belongs to the gemin-2 family. In terms of assembly, monomer. Part of the core SMN complex that contains SMN1, GEMIN2/SIP1, DDX20/GEMIN3, GEMIN4, GEMIN5, GEMIN6, GEMIN7, GEMIN8 and STRAP/UNRIP. Part of the SMN-Sm complex that contains SMN1, GEMIN2/SIP1, DDX20/GEMIN3, GEMIN4, GEMIN5, GEMIN6, GEMIN7, GEMIN8, STRAP/UNRIP and the Sm proteins SNRPB, SNRPD1, SNRPD2, SNRPD3, SNRPE, SNRPF and SNRPG. Interacts with GEMIN5; the interaction is direct. Interacts (via C-terminus) with SMN1; the interaction is direct. Interacts with SNRPD1; the interaction is direct. Interacts with SNRPD2; the interaction is direct. Interacts (via N-terminus) with SNRPF; the interaction is direct. Interacts (via N-terminus) with SNRPE; the interaction is direct. Interacts (via N-terminus) with SNRPG; the interaction is direct.

The protein resides in the nucleus. Its subcellular location is the gem. The protein localises to the cytoplasm. Its function is as follows. The SMN complex catalyzes the assembly of small nuclear ribonucleoproteins (snRNPs), the building blocks of the spliceosome, and thereby plays an important role in the splicing of cellular pre-mRNAs. Most spliceosomal snRNPs contain a common set of Sm proteins SNRPB, SNRPD1, SNRPD2, SNRPD3, SNRPE, SNRPF and SNRPG that assemble in a heptameric protein ring on the Sm site of the small nuclear RNA to form the core snRNP (Sm core). In the cytosol, the Sm proteins SNRPD1, SNRPD2, SNRPE, SNRPF and SNRPG (5Sm) are trapped in an inactive 6S pICln-Sm complex by the chaperone CLNS1A that controls the assembly of the core snRNP. To assemble core snRNPs, the SMN complex accepts the trapped 5Sm proteins from CLNS1A. Binding of snRNA inside 5Sm ultimately triggers eviction of the SMN complex, thereby allowing binding of SNRPD3 and SNRPB to complete assembly of the core snRNP. Within the SMN complex, GEMIN2 constrains the conformation of 5Sm, thereby promoting 5Sm binding to snRNA containing the snRNP code (a nonameric Sm site and a 3'-adjacent stem-loop), thus preventing progression of assembly until a cognate substrate is bound. In Homo sapiens (Human), this protein is Gem-associated protein 2.